Reading from the N-terminus, the 269-residue chain is 4-hydroxy-tetrahydrodipicolinate reductase (269 aa).

Residues 11-16 (GASGRM) and E37 each bind NAD(+). Residue R38 coordinates NADP(+). NAD(+)-binding positions include 101-103 (GTT) and 125-128 (AGNM). The active-site Proton donor/acceptor is the H158. H159 lines the (S)-2,3,4,5-tetrahydrodipicolinate pocket. K162 acts as the Proton donor in catalysis. A (S)-2,3,4,5-tetrahydrodipicolinate-binding site is contributed by 168–169 (GT).

Belongs to the DapB family.

The protein localises to the cytoplasm. The enzyme catalyses (S)-2,3,4,5-tetrahydrodipicolinate + NAD(+) + H2O = (2S,4S)-4-hydroxy-2,3,4,5-tetrahydrodipicolinate + NADH + H(+). It catalyses the reaction (S)-2,3,4,5-tetrahydrodipicolinate + NADP(+) + H2O = (2S,4S)-4-hydroxy-2,3,4,5-tetrahydrodipicolinate + NADPH + H(+). It functions in the pathway amino-acid biosynthesis; L-lysine biosynthesis via DAP pathway; (S)-tetrahydrodipicolinate from L-aspartate: step 4/4. Its function is as follows. Catalyzes the conversion of 4-hydroxy-tetrahydrodipicolinate (HTPA) to tetrahydrodipicolinate. The chain is 4-hydroxy-tetrahydrodipicolinate reductase from Cereibacter sphaeroides (strain ATCC 17023 / DSM 158 / JCM 6121 / CCUG 31486 / LMG 2827 / NBRC 12203 / NCIMB 8253 / ATH 2.4.1.) (Rhodobacter sphaeroides).